A 144-amino-acid polypeptide reads, in one-letter code: Nucleoside diphosphate kinase (144 aa).

Residues lysine 11, phenylalanine 59, arginine 87, threonine 93, arginine 104, and asparagine 114 each coordinate ATP. Histidine 117 serves as the catalytic Pros-phosphohistidine intermediate.

Belongs to the NDK family. As to quaternary structure, homotetramer. It depends on Mg(2+) as a cofactor.

Its subcellular location is the cytoplasm. The enzyme catalyses a 2'-deoxyribonucleoside 5'-diphosphate + ATP = a 2'-deoxyribonucleoside 5'-triphosphate + ADP. It catalyses the reaction a ribonucleoside 5'-diphosphate + ATP = a ribonucleoside 5'-triphosphate + ADP. Major role in the synthesis of nucleoside triphosphates other than ATP. The ATP gamma phosphate is transferred to the NDP beta phosphate via a ping-pong mechanism, using a phosphorylated active-site intermediate. The protein is Nucleoside diphosphate kinase of Aliivibrio salmonicida (strain LFI1238) (Vibrio salmonicida (strain LFI1238)).